The following is a 315-amino-acid chain: Probable cell division protein WhiA (315 aa).

Residues 280–313 (SLKELGEMLDPPVGKSGINHRLRKIEKIAEELRT) constitute a DNA-binding region (H-T-H motif).

Belongs to the WhiA family.

In terms of biological role, involved in cell division and chromosome segregation. The protein is Probable cell division protein WhiA of Clostridium beijerinckii (strain ATCC 51743 / NCIMB 8052) (Clostridium acetobutylicum).